We begin with the raw amino-acid sequence, 444 residues long: 3-phosphoshikimate 1-carboxyvinyltransferase (444 aa).

Lys-29, Ser-30, and Arg-34 together coordinate 3-phosphoshikimate. A phosphoenolpyruvate-binding site is contributed by Lys-29. Residues Gly-102 and Arg-131 each coordinate phosphoenolpyruvate. 4 residues coordinate 3-phosphoshikimate: Ser-176, Gln-178, Asp-326, and Lys-353. Residue Gln-178 participates in phosphoenolpyruvate binding. Residue Asp-326 is the Proton acceptor of the active site. Arg-357 and Arg-399 together coordinate phosphoenolpyruvate.

The protein belongs to the EPSP synthase family. In terms of assembly, monomer.

The protein resides in the cytoplasm. It carries out the reaction 3-phosphoshikimate + phosphoenolpyruvate = 5-O-(1-carboxyvinyl)-3-phosphoshikimate + phosphate. It functions in the pathway metabolic intermediate biosynthesis; chorismate biosynthesis; chorismate from D-erythrose 4-phosphate and phosphoenolpyruvate: step 6/7. Catalyzes the transfer of the enolpyruvyl moiety of phosphoenolpyruvate (PEP) to the 5-hydroxyl of shikimate-3-phosphate (S3P) to produce enolpyruvyl shikimate-3-phosphate and inorganic phosphate. The chain is 3-phosphoshikimate 1-carboxyvinyltransferase from Synechococcus sp. (strain JA-3-3Ab) (Cyanobacteria bacterium Yellowstone A-Prime).